A 241-amino-acid chain; its full sequence is MATVSMRDMLQAGVHFGHQTRYWNPKMKPFIFGARNKVHIINLEKTVPMFNDALAELNKIASRKGKILFVGTKRAASEAVKEAAQNCDQFFVNHRWLGGMLTNWKTVRQSIKRLKDLEAQSQDGTFDKLTKKEALIRSRELGKLENSLGGIKDMGGLPDALFVIDAEHEHIAIKEANNLGIPVFAVVDTNSDPDGVDFIIPGNDDAIRAVKLYLGAVATAVREGRSQDLAVQAEESFVEAE.

This sequence belongs to the universal ribosomal protein uS2 family.

The sequence is that of Small ribosomal subunit protein uS2 from Photorhabdus laumondii subsp. laumondii (strain DSM 15139 / CIP 105565 / TT01) (Photorhabdus luminescens subsp. laumondii).